The following is a 222-amino-acid chain: Interleukin-12 subunit alpha (222 aa).

Positions 1–25 (MCPPRGLLLVAILVLLNHLDHLSLA) are cleaved as a signal peptide. Cystine bridges form between Cys40–Cys113, Cys67–Cys199, and Cys88–Cys126. N-linked (GlcNAc...) asparagine glycosylation is found at Asn42, Asn96, and Asn110.

The protein belongs to the IL-6 superfamily. In terms of assembly, heterodimer with IL12B; disulfide-linked. This heterodimer is known as interleukin IL-12. Heterodimer with EBI3/IL27B; not disulfide-linked. This heterodimer is known as interleukin IL-35. Interacts with NBR1; this interaction promotes IL-12 secretion.

Its subcellular location is the secreted. Heterodimerizes with IL12B to form the IL-12 cytokine or with EBI3/IL27B to form the IL-35 cytokine. IL-12 is primarily produced by professional antigen-presenting cells (APCs) such as B-cells and dendritic cells (DCs) as well as macrophages and granulocytes and regulates T-cell and natural killer-cell responses, induces the production of interferon-gamma (IFN-gamma), favors the differentiation of T-helper 1 (Th1) cells and is an important link between innate resistance and adaptive immunity. Mechanistically, exerts its biological effects through a receptor composed of IL12R1 and IL12R2 subunits. Binding to the receptor results in the rapid tyrosine phosphorylation of a number of cellular substrates including the JAK family kinases TYK2 and JAK2. In turn, recruited STAT4 gets phosphorylated and translocates to the nucleus where it regulates cytokine/growth factor responsive genes. As part of IL-35, plays essential roles in maintaining the immune homeostasis of the liver microenvironment and also functions as an immune-suppressive cytokine. Mediates biological events through unconventional receptors composed of IL12RB2 and gp130/IL6ST heterodimers or homodimers. Signaling requires the transcription factors STAT1 and STAT4, which form a unique heterodimer that binds to distinct DNA sites. The sequence is that of Interleukin-12 subunit alpha (IL12A) from Equus caballus (Horse).